Here is a 321-residue protein sequence, read N- to C-terminus: Glyoxylate/hydroxypyruvate reductase B (321 aa).

Residues R237 and E266 contribute to the active site. H285 functions as the Proton donor in the catalytic mechanism.

Belongs to the D-isomer specific 2-hydroxyacid dehydrogenase family. GhrB subfamily. Homodimer.

It is found in the cytoplasm. It carries out the reaction glycolate + NADP(+) = glyoxylate + NADPH + H(+). The catalysed reaction is (R)-glycerate + NAD(+) = 3-hydroxypyruvate + NADH + H(+). The enzyme catalyses (R)-glycerate + NADP(+) = 3-hydroxypyruvate + NADPH + H(+). In terms of biological role, catalyzes the NADPH-dependent reduction of glyoxylate and hydroxypyruvate into glycolate and glycerate, respectively. The protein is Glyoxylate/hydroxypyruvate reductase B of Erwinia tasmaniensis (strain DSM 17950 / CFBP 7177 / CIP 109463 / NCPPB 4357 / Et1/99).